The following is a 785-amino-acid chain: MAVNGAQYIFGEFSPDEFNQFFVTPRCSVELPPYNETVSCGIKSTNEEYQRIEFGVNEVIETESSVLNNTDYSISSTLNPQAPEFILSCAPAQKTPDETNYNSIDCQFSDPTLTLDSGSNAENDGLSGGLGQRERKKKKKRPPGYYSYLEDVSDGVAPTEALVNGHANSSGLNSIGTEDTELTGDIPSLATPRTCNSPDNSVDFVHEAVSDDSVSSALDNTRTAGQPEVCRVTNSEQFCIPSETGRDSPLRTAVVQPYAGTDTTESLGVTNGQTLESSGEDTAANGVELHTVESTDSDQAKPEEASPTTEATATVAGSVPVNQPAKSWASLFHNSKPSASTSVVYVETKYTPPATSTLVPEKQVEVKEGPVPVSEDPVAIKIAELLENVKLVHKPVSLQPRGLINKGNWCYINATLQALVACPPMYHLMKSIPMYSKSQRPCTSTPMIDSFVRLMNEFTNMPVPPKAKQALGDKIVRDIRPGAAFEPTYIYRLLTVIKSSLSEKGRQEDAEEYLGFILNGLHEEMLTLKKLLSPHNEKLSVSNGPEVQTVREEEEQDEQGEGSEDEWEQVGPRNKSSVTRQADFVQTPITDIFGGHIRSVVYQQSSKESATLQPFFTLQLDIQSDKIRTVQDALESLVARESVQGYTTKTKQEVEISRRVTLEELPPVLVLHLKRFVYEKTGGCQKLIKNIEYPVDLEISKELLSPGVKSKIFKGQRTYRLFAVVYHHGNSATGDHYTTDVFQIGLNGWLRIDDQAVKVINQYQVVKPSAERTAYLLYYRRVDLL.

Polar residues-rich tracts occupy residues 113 to 122 (LTLDSGSNAE) and 262 to 277 (DTTE…TLES). 2 disordered regions span residues 113–145 (LTLD…PPGY) and 262–314 (DTTE…ATAT). A compositionally biased stretch (basic and acidic residues) spans 290–304 (HTVESTDSDQAKPEE). Low complexity predominate over residues 305 to 314 (ASPTTEATAT). The region spanning 401–782 (RGLINKGNWC…TAYLLYYRRV (382 aa)) is the USP domain. The Nucleophile role is filled by Cys410. Residues 537–581 (EKLSVSNGPEVQTVREEEEQDEQGEGSEDEWEQVGPRNKSSVTRQ) form a disordered region. Over residues 552–568 (EEEEQDEQGEGSEDEWE) the composition is skewed to acidic residues. The active-site Proton acceptor is His736.

Belongs to the peptidase C19 family. USP10 subfamily.

The protein resides in the cytoplasm. It is found in the nucleus. It catalyses the reaction Thiol-dependent hydrolysis of ester, thioester, amide, peptide and isopeptide bonds formed by the C-terminal Gly of ubiquitin (a 76-residue protein attached to proteins as an intracellular targeting signal).. In terms of biological role, hydrolase that can remove conjugated ubiquitin from target proteins such as p53/TP53, RPS2/us5, RPS3/us3, RPS10/eS10, BECN1, SNX3 and CFTR. Acts as an essential regulator of p53/TP53 stability: in unstressed cells, specifically deubiquitinates p53/TP53 in the cytoplasm, leading to counteracts MDM2 action and stabilize p53/TP53. Following DNA damage, translocates to the nucleus and deubiquitinates p53/TP53, leading to regulate the p53/TP53-dependent DNA damage response. Component of a regulatory loop that controls autophagy and p53/TP53 levels. Plays a key role in 40S ribosome subunit recycling when a ribosome has stalled during translation: acts both by inhibiting formation of stress granules, which store stalled translation pre-initiation complexes, and mediating deubiquitination of 40S ribosome subunits. Deubiquitinates CFTR in early endosomes, enhancing its endocytic recycling. The chain is Ubiquitin carboxyl-terminal hydrolase 10 (USP10) from Gallus gallus (Chicken).